Consider the following 225-residue polypeptide: tRNA 2'-phosphotransferase 1 (225 aa).

A disordered region spans residues 1–21; sequence MDCETRGRGRRGRGNRNEESR.

It belongs to the KptA/TPT1 family.

It catalyses the reaction 2'-phospho-[ligated tRNA] + NAD(+) = mature tRNA + ADP-alpha-D-ribose 1'',2''-cyclic phosphate + nicotinamide. Catalyzes the last step of tRNA splicing, the transfer of the splice junction 2'-phosphate from ligated tRNA to NAD to produce ADP-ribose 1''-2'' cyclic phosphate. The protein is tRNA 2'-phosphotransferase 1 (trpt1) of Danio rerio (Zebrafish).